A 196-amino-acid polypeptide reads, in one-letter code: Large ribosomal subunit protein eL15 (196 aa).

2 disordered regions span residues 72 to 93 (SARK…TRIT) and 163 to 196 (GLTG…GKGK).

The protein belongs to the eukaryotic ribosomal protein eL15 family. Part of the 50S ribosomal subunit. Interacts with protein L7Ae and weakly with L44e.

The polypeptide is Large ribosomal subunit protein eL15 (rpl15e) (Haloarcula marismortui (strain ATCC 43049 / DSM 3752 / JCM 8966 / VKM B-1809) (Halobacterium marismortui)).